Reading from the N-terminus, the 360-residue chain is DNA replication and repair protein RecF (360 aa).

30-37 is an ATP binding site; the sequence is GDNAQGKT.

This sequence belongs to the RecF family.

The protein localises to the cytoplasm. Functionally, the RecF protein is involved in DNA metabolism; it is required for DNA replication and normal SOS inducibility. RecF binds preferentially to single-stranded, linear DNA. It also seems to bind ATP. In Lachnoclostridium phytofermentans (strain ATCC 700394 / DSM 18823 / ISDg) (Clostridium phytofermentans), this protein is DNA replication and repair protein RecF.